A 171-amino-acid chain; its full sequence is Lipoprotein signal peptidase (171 aa).

The next 4 membrane-spanning stretches (helical) occupy residues 12–32, 42–62, 70–90, and 96–116; these read LAWL…KLYF, IVVI…AAFS, WQRW…VVWL, and NETW…GNLY. Catalysis depends on residues aspartate 126 and aspartate 145. A helical transmembrane segment spans residues 137–157; that stretch reads YFPAFNVADSAITVGAVMLAL.

This sequence belongs to the peptidase A8 family.

The protein resides in the cell inner membrane. It carries out the reaction Release of signal peptides from bacterial membrane prolipoproteins. Hydrolyzes -Xaa-Yaa-Zaa-|-(S,diacylglyceryl)Cys-, in which Xaa is hydrophobic (preferably Leu), and Yaa (Ala or Ser) and Zaa (Gly or Ala) have small, neutral side chains.. It functions in the pathway protein modification; lipoprotein biosynthesis (signal peptide cleavage). In terms of biological role, this protein specifically catalyzes the removal of signal peptides from prolipoproteins. The polypeptide is Lipoprotein signal peptidase (Pseudomonas putida (strain ATCC 47054 / DSM 6125 / CFBP 8728 / NCIMB 11950 / KT2440)).